The primary structure comprises 409 residues: Multidrug resistance protein MdtG (409 aa).

10 helical membrane-spanning segments follow: residues 16-36, 58-78, 92-112, 115-135, 146-166, 173-193, 224-244, 256-276, 291-311, and 379-399; these read LIVAWLGCFLTGAAFSLVMPF, IVFSITFLFSAIASPFWGGLA, LGMGIVMVLMGLAQNIWQFLI, ALLGLLGGFVPNANALIATQV, TLSTGGVSGALLGPMAGGLLA, PVFFITASVLILCFFVTLFCI, LFVTTLIIQVATGSIAPILTL, VAFISGMIASVPGVAALLLSA, ILITALIFSVLLLIPMSYVQT, and AVFLVTAGVVLFNAVYSWNSL.

The protein belongs to the major facilitator superfamily. DHA1 family. MdtG (TC 2.A.1.2.20) subfamily.

It is found in the cell inner membrane. In terms of biological role, confers resistance to fosfomycin and deoxycholate. This chain is Multidrug resistance protein MdtG, found in Escherichia coli O9:H4 (strain HS).